A 384-amino-acid polypeptide reads, in one-letter code: PqqA peptide cyclase (384 aa).

Residues 5-220 (VGLPLWLLAE…TNEYREKLKA (216 aa)) form the Radical SAM core domain. [4Fe-4S] cluster-binding residues include C19, C23, and C26.

It belongs to the radical SAM superfamily. PqqE family. Interacts with PqqD. The interaction is necessary for activity of PqqE. It depends on [4Fe-4S] cluster as a cofactor.

It carries out the reaction [PQQ precursor protein] + S-adenosyl-L-methionine = E-Y cross-linked-[PQQ precursor protein] + 5'-deoxyadenosine + L-methionine + H(+). The protein operates within cofactor biosynthesis; pyrroloquinoline quinone biosynthesis. Catalyzes the cross-linking of a glutamate residue and a tyrosine residue in the PqqA protein as part of the biosynthesis of pyrroloquinoline quinone (PQQ). The sequence is that of PqqA peptide cyclase from Acinetobacter baumannii (strain SDF).